The primary structure comprises 176 residues: 3-hydroxydecanoyl-[acyl-carrier-protein] dehydratase (176 aa).

Residue histidine 75 is part of the active site.

This sequence belongs to the thioester dehydratase family. FabA subfamily. As to quaternary structure, homodimer.

The protein resides in the cytoplasm. It catalyses the reaction a (3R)-hydroxyacyl-[ACP] = a (2E)-enoyl-[ACP] + H2O. It carries out the reaction (3R)-hydroxydecanoyl-[ACP] = (2E)-decenoyl-[ACP] + H2O. The enzyme catalyses (2E)-decenoyl-[ACP] = (3Z)-decenoyl-[ACP]. The protein operates within lipid metabolism; fatty acid biosynthesis. Necessary for the introduction of cis unsaturation into fatty acids. Catalyzes the dehydration of (3R)-3-hydroxydecanoyl-ACP to E-(2)-decenoyl-ACP and then its isomerization to Z-(3)-decenoyl-ACP. Can catalyze the dehydratase reaction for beta-hydroxyacyl-ACPs with saturated chain lengths up to 16:0, being most active on intermediate chain length. This Glaesserella parasuis serovar 5 (strain SH0165) (Haemophilus parasuis) protein is 3-hydroxydecanoyl-[acyl-carrier-protein] dehydratase.